The sequence spans 155 residues: MSRRGTAEEKIEKSDPIYRNRLVNMLVNRILKHGKKSLAYQIIYRAMKKIQQKTETNPLSVLRQAIRGVTPDIAVKARRVGGSTHQVPIEIGSTQGKALAIRWLLGASRKRPGRNMAFKFSSELVDAAKGSGDAIRKKEETHRMAEANRAFAHFR.

This sequence belongs to the universal ribosomal protein uS7 family. Part of the 30S ribosomal subunit.

It is found in the plastid. The protein resides in the chloroplast. Functionally, one of the primary rRNA binding proteins, it binds directly to 16S rRNA where it nucleates assembly of the head domain of the 30S subunit. In Cucumis sativus (Cucumber), this protein is Small ribosomal subunit protein uS7cz/uS7cy (rps7-A).